The primary structure comprises 81 residues: Control protein C.BamHI (81 aa).

Positions 13 to 68 constitute an HTH cro/C1-type domain; it reads VRQIRLSKSNMSQEKLAFECDLHRTYISDIERGTRNVSLDNIEKISKALGVQPKDL. Positions 25 to 44 form a DNA-binding region, H-T-H motif; that stretch reads QEKLAFECDLHRTYISDIER.

In terms of biological role, may help modulate methylase (M) and restriction enzyme (R) expression as cells undergo physiological changes such as sporulation or transformation. This Bacillus amyloliquefaciens (Bacillus velezensis) protein is Control protein C.BamHI.